The chain runs to 367 residues: uncharacterized protein (367 aa).

Residues I6–G26 traverse the membrane as a helical segment.

It to E.coli YdgA and YihF.

The protein localises to the membrane. This is an uncharacterized protein from Haemophilus influenzae (strain ATCC 51907 / DSM 11121 / KW20 / Rd).